The primary structure comprises 208 residues: Ribosomal RNA large subunit methyltransferase E (208 aa).

The S-adenosyl-L-methionine site is built by Gly62, Trp64, Asp82, Asp98, and Asp123. Lys163 serves as the catalytic Proton acceptor.

Belongs to the class I-like SAM-binding methyltransferase superfamily. RNA methyltransferase RlmE family.

It localises to the cytoplasm. It catalyses the reaction uridine(2552) in 23S rRNA + S-adenosyl-L-methionine = 2'-O-methyluridine(2552) in 23S rRNA + S-adenosyl-L-homocysteine + H(+). In terms of biological role, specifically methylates the uridine in position 2552 of 23S rRNA at the 2'-O position of the ribose in the fully assembled 50S ribosomal subunit. In Actinobacillus pleuropneumoniae serotype 5b (strain L20), this protein is Ribosomal RNA large subunit methyltransferase E.